We begin with the raw amino-acid sequence, 104 residues long: Protein MHF2 homolog (104 aa).

It belongs to the CENP-X/MHF2 family.

The protein resides in the nucleus. Acts in the same pathway as FANCM to restrain class II meiotic crossing over (CO), and acts with FANCM during meiosis to repair interstrand cross-links (ICLs). This is Protein MHF2 homolog from Arabidopsis thaliana (Mouse-ear cress).